Here is a 361-residue protein sequence, read N- to C-terminus: tRNA/tmRNA (uracil-C(5))-methyltransferase (361 aa).

Q185, Y213, N218, E234, and D294 together coordinate S-adenosyl-L-methionine. C319 functions as the Nucleophile in the catalytic mechanism. Catalysis depends on E353, which acts as the Proton acceptor.

Belongs to the class I-like SAM-binding methyltransferase superfamily. RNA M5U methyltransferase family. TrmA subfamily.

It catalyses the reaction uridine(54) in tRNA + S-adenosyl-L-methionine = 5-methyluridine(54) in tRNA + S-adenosyl-L-homocysteine + H(+). The enzyme catalyses uridine(341) in tmRNA + S-adenosyl-L-methionine = 5-methyluridine(341) in tmRNA + S-adenosyl-L-homocysteine + H(+). Dual-specificity methyltransferase that catalyzes the formation of 5-methyluridine at position 54 (m5U54) in all tRNAs, and that of position 341 (m5U341) in tmRNA (transfer-mRNA). The chain is tRNA/tmRNA (uracil-C(5))-methyltransferase from Pseudomonas savastanoi pv. phaseolicola (strain 1448A / Race 6) (Pseudomonas syringae pv. phaseolicola (strain 1448A / Race 6)).